A 186-amino-acid polypeptide reads, in one-letter code: Chromosomal replication initiator protein DnaA (186 aa).

Position 1 (glutamate 1) is a region of interest, domain I, interacts with DnaA modulators. A region of interest (domain II) is located at residue glutamate 1. A domain III, AAA+ region region spans residues 1-99 (EFFKTFNALI…GALNKVTHTS (99 aa)). Residues 100 to 186 (LIGRSMTVES…GRNFGGRDHT (87 aa)) form a domain IV, binds dsDNA region.

This sequence belongs to the DnaA family. In terms of assembly, oligomerizes as a right-handed, spiral filament on DNA at oriC.

It localises to the cytoplasm. Functionally, plays an essential role in the initiation and regulation of chromosomal replication. ATP-DnaA binds to the origin of replication (oriC) to initiate formation of the DNA replication initiation complex once per cell cycle. Binds the DnaA box (a 9 base pair repeat at the origin) and separates the double-stranded (ds)DNA. Forms a right-handed helical filament on oriC DNA; dsDNA binds to the exterior of the filament while single-stranded (ss)DNA is stabiized in the filament's interior. The ATP-DnaA-oriC complex binds and stabilizes one strand of the AT-rich DNA unwinding element (DUE), permitting loading of DNA polymerase. After initiation quickly degrades to an ADP-DnaA complex that is not apt for DNA replication. Binds acidic phospholipids. The sequence is that of Chromosomal replication initiator protein DnaA from Wolbachia sp.